We begin with the raw amino-acid sequence, 119 residues long: Large ribosomal subunit protein bL20 (119 aa).

Belongs to the bacterial ribosomal protein bL20 family.

Functionally, binds directly to 23S ribosomal RNA and is necessary for the in vitro assembly process of the 50S ribosomal subunit. It is not involved in the protein synthesizing functions of that subunit. The polypeptide is Large ribosomal subunit protein bL20 (Halalkalibacterium halodurans (strain ATCC BAA-125 / DSM 18197 / FERM 7344 / JCM 9153 / C-125) (Bacillus halodurans)).